Here is a 221-residue protein sequence, read N- to C-terminus: Uracil-DNA glycosylase 1 (221 aa).

Residue aspartate 61 is the Proton acceptor of the active site.

The protein belongs to the uracil-DNA glycosylase (UDG) superfamily. UNG family.

It is found in the cytoplasm. The catalysed reaction is Hydrolyzes single-stranded DNA or mismatched double-stranded DNA and polynucleotides, releasing free uracil.. In terms of biological role, excises uracil residues from the DNA which can arise as a result of misincorporation of dUMP residues by DNA polymerase or due to deamination of cytosine. This Listeria monocytogenes serovar 1/2a (strain ATCC BAA-679 / EGD-e) protein is Uracil-DNA glycosylase 1.